The chain runs to 156 residues: Small ribosomal subunit protein uS7 (156 aa).

It belongs to the universal ribosomal protein uS7 family. In terms of assembly, part of the 30S ribosomal subunit. Contacts proteins S9 and S11.

One of the primary rRNA binding proteins, it binds directly to 16S rRNA where it nucleates assembly of the head domain of the 30S subunit. Is located at the subunit interface close to the decoding center, probably blocks exit of the E-site tRNA. This chain is Small ribosomal subunit protein uS7, found in Bifidobacterium longum subsp. infantis (strain ATCC 15697 / DSM 20088 / JCM 1222 / NCTC 11817 / S12).